Consider the following 291-residue polypeptide: Aspartate carbamoyltransferase catalytic subunit (291 aa).

The carbamoyl phosphate site is built by Arg-47 and Thr-48. Lys-75 lines the L-aspartate pocket. Carbamoyl phosphate contacts are provided by Arg-97, His-126, and Gln-129. Residues Arg-159 and Arg-213 each coordinate L-aspartate. Residues Gly-251 and Pro-252 each coordinate carbamoyl phosphate.

It belongs to the aspartate/ornithine carbamoyltransferase superfamily. ATCase family. As to quaternary structure, heterododecamer (2C3:3R2) of six catalytic PyrB chains organized as two trimers (C3), and six regulatory PyrI chains organized as three dimers (R2).

The enzyme catalyses carbamoyl phosphate + L-aspartate = N-carbamoyl-L-aspartate + phosphate + H(+). It functions in the pathway pyrimidine metabolism; UMP biosynthesis via de novo pathway; (S)-dihydroorotate from bicarbonate: step 2/3. Catalyzes the condensation of carbamoyl phosphate and aspartate to form carbamoyl aspartate and inorganic phosphate, the committed step in the de novo pyrimidine nucleotide biosynthesis pathway. The sequence is that of Aspartate carbamoyltransferase catalytic subunit from Aquifex aeolicus (strain VF5).